Consider the following 577-residue polypeptide: Maltase A1 (577 aa).

The signal sequence occupies residues 1–19; sequence MRPQSAACLLLAIVGFVGA. N-linked (GlcNAc...) asparagine glycosylation is found at N119 and N151. The active-site Nucleophile is D221. N-linked (GlcNAc...) asparagine glycosylation occurs at N244. E297 acts as the Proton donor in catalysis. N315 and N331 each carry an N-linked (GlcNAc...) asparagine glycan.

Belongs to the glycosyl hydrolase 13 family.

The catalysed reaction is Hydrolysis of terminal, non-reducing (1-&gt;4)-linked alpha-D-glucose residues with release of alpha-D-glucose.. This chain is Maltase A1 (Mal-A1), found in Drosophila melanogaster (Fruit fly).